The following is a 712-amino-acid chain: Polyadenylation factor subunit 2 (712 aa).

Residues 1–37 (MTAPTVPADQHGHPLPGPADPAANDTWRPSRYREPLH) form a disordered region. WD repeat units follow at residues 131-170 (KERS…YESI), 173-213 (VHDD…HGFQ), 214-253 (GHRE…EERS), 256-295 (GHGW…DLST), 298-337 (SSKS…ELEV), 340-380 (GHEK…PSTP), and 387-426 (AHED…GGQE). Disordered regions lie at residues 446-473 (TKRE…KQQV) and 489-712 (KTGP…DGRR). Gly residues-rich tracts occupy residues 460-469 (AGGGGGGGGD) and 494-504 (TTGGGPSGLPG). Residues 533–545 (QGQAQGGQFPRGR) are compositionally biased toward low complexity. A compositionally biased stretch (basic and acidic residues) spans 565-592 (FADRDRNGGGDRGGMDRDRDSRGGRQDP). 2 stretches are compositionally biased toward pro residues: residues 603 to 612 (GGPPPGPPPG) and 619 to 671 (PPAP…PQGP). Residues 678-712 (GGQGNYGASASGGYGQYGGGGGGGGGGGYGRDGRR) are compositionally biased toward gly residues.

The protein resides in the nucleus. Functionally, required for 3'-end cleavage and polyadenylation of pre-mRNAs. Also involved in chromosome segregation where it has a role in chromosome attachment to the mitotic spindle. This Cryptococcus neoformans var. neoformans serotype D (strain JEC21 / ATCC MYA-565) (Filobasidiella neoformans) protein is Polyadenylation factor subunit 2 (PFS2).